Here is a 212-residue protein sequence, read N- to C-terminus: Methylthioribulose-1-phosphate dehydratase (212 aa).

Residues histidine 97 and histidine 99 each coordinate Zn(2+).

It belongs to the aldolase class II family. MtnB subfamily. As to quaternary structure, homotetramer. It depends on Zn(2+) as a cofactor.

The enzyme catalyses 5-(methylsulfanyl)-D-ribulose 1-phosphate = 5-methylsulfanyl-2,3-dioxopentyl phosphate + H2O. It functions in the pathway amino-acid biosynthesis; L-methionine biosynthesis via salvage pathway; L-methionine from S-methyl-5-thio-alpha-D-ribose 1-phosphate: step 2/6. Its function is as follows. Catalyzes the dehydration of methylthioribulose-1-phosphate (MTRu-1-P) into 2,3-diketo-5-methylthiopentyl-1-phosphate (DK-MTP-1-P). The polypeptide is Methylthioribulose-1-phosphate dehydratase (Bacillus cereus (strain ZK / E33L)).